The chain runs to 955 residues: UPF0182 protein syc2310_c (955 aa).

9 helical membrane-spanning segments follow: residues 12–32, 45–65, 85–105, 141–161, 163–183, 224–244, 263–283, 306–326, and 343–363; these read IAAIALGLSLLTRIHIETLWF, LAVQALLFSVVGIAITGLIGG, LQLGGLLTVLTLLWIALLALT, GSWPLGMGLLLGVGSLVLFLW, PWPLLIGLSSLTSLAIALLTS, FDLWIGLAFSFCAVLAVYYLA, HLVRLAIAIALFLAGHCWLAQ, LPLLQVWMILFGIAAIALFWQ, and AAIASVLIWVTLPAIVQQLVV.

The protein belongs to the UPF0182 family.

It localises to the cell membrane. This Synechococcus sp. (strain ATCC 27144 / PCC 6301 / SAUG 1402/1) (Anacystis nidulans) protein is UPF0182 protein syc2310_c.